We begin with the raw amino-acid sequence, 1235 residues long: MAHLELLLVENFKSWRGRQVIGPFRRFTCIIGPNGSGKSNVMDALSFVMGEKIANLRVKNIQELIHGAHIGKPISSSASVKIIYVEESGEEKTFARIIRGGCSEFRFNDNLVSRSVYIAELEKIGIIVKAQNCLVFQGTVESISVKKPKERTQFFEEISTSGELIGEYEEKKRKLQKAEEDAQFNFNKKKNIAAERRQAKLEKEEAERYQSLLEELKMNKIQLQLFQLYHNEKKIHLLNTKLEHVNRDLSVKRESLSHHENIVKARKKEHGMLTRQLQQTEKELKSVETLLNQKRPQYIKAKENTSHHLKKLDVAKKSIKDSEKQCSKQEDDIKALETELADLDAAWRSFEKQIEEEILHKKRDIELEASQLDRYKELKEQVRKKVATMTQQLEKLQWEQKTDEERLAFEKRRHGEVQGNLKQIKEQIEDHKKRIEKLEEYTKTCMDCLKEKKQQEETLVDEIEKTKSRMSEVNEELNLIRSELQNAGIDTHEGKRQQKRAEVLEHLKRLYPDSVFGRLFDLCHPIHKKYQLAVTKVFGRFITAIVVASEKVAKDCIRFLKEERAEPETFLALDYLDIKPINERLRELKGCKMVIDVIKTQFPQLKKVIQFVCGNGLVCETMEEARHIALSGPERQKTVALDGTLFLKSGVISGGSSDLKYKARCWDEKELKNLRDRRSQKIQELKGLMKTLRKETDLKQIQTLIQGTQTRLKYSQNELEMIKKKHLVAFYQEQSQLQSELLNIESQCIMLSEGIKERQRRIKEFQEKIDKVEDDIFQHFCEEIGVENIREFENKHVKRQQEIDQKRLEFEKQKTRLNVQLEYSRSHLKKKLNKINTLKETIQKGSEDIDHLKKAEENCLQTVNELMAKQQQLKDIRVTQNSSAEKVQTQIEEERKKFLAVDREVGKLQKEVVSIQTSLEQKRLEKHNLLLDCKVQDIEIILLSGSLDDIIEVEMGTEAESTQATIDIYEKEEAFEIDYSSLKEDLKALQSDQEIEAHLRLLLQQVASQEDILLKTAAPNLRALENLKTVRDKFQESTDAFEASRKEARLCRQEFEQVKKRRYDLFTQCFEHVSISIDQIYKKLCRNNSAQAFLSPENPEEPYLEGISYNCVAPGKRFMPMDNLSGGEKCVAALALLFAVHSFRPAPFFVLDEVDAALDNTNIGKVSSYIKEQTQDQFQMIVISLKEEFYSRADALIGIYPEYDDCMFSRVLTLDLSQYPDTEGQESSKRHGESR.

32 to 39 (GPNGSGKS) contributes to the ATP binding site. A coiled-coil region spans residues 156-490 (EEISTSGELI…RSELQNAGID (335 aa)). One can recognise an SMC hinge domain in the interval 514-629 (SVFGRLFDLC…ETMEEARHIA (116 aa)). N6-acetyllysine occurs at positions 648 and 713. Coiled coils occupy residues 666 to 934 (WDEK…LDCK), 970 to 994 (EKEEAFEIDYSSLKEDLKALQSDQE), and 1022 to 1049 (RALENLKTVRDKFQESTDAFEASRKEAR). Lysine 1033 carries the N6-acetyllysine modification.

The protein belongs to the SMC family. SMC1 subfamily. In terms of assembly, forms a heterodimer with SMC3. Component of a meiosis-specific cohesin complex, probably composed of the SMC1B and SMC3 heterodimer attached via their SMC hinge domain, RAD21 (or its meiosis-specific related protein REC8), which link them, and STAG3, which interacts with RAD21 or REC8. The cohesin complex interacts with the cohesin loading complex subunits NIPBL/Scc2 (via HEAT repeats) and MAU2/Scc4. NIPBL directly contacts all members of the complex, RAD21, SMC1A/B, SMC3 and STAG1.

Its subcellular location is the nucleus. It is found in the chromosome. The protein resides in the centromere. Its function is as follows. Meiosis-specific component of cohesin complex. Required for the maintenance of meiotic cohesion, but not, or only to a minor extent, for its establishment. Contributes to axial element (AE) formation and the organization of chromatin loops along the AE. Plays a key role in synapsis, recombination and chromosome movements. The cohesin complex is required for the cohesion of sister chromatids after DNA replication. The cohesin complex apparently forms a large proteinaceous ring within which sister chromatids can be trapped. At anaphase, the complex is cleaved and dissociates from chromatin, allowing sister chromatids to segregate. The meiosis-specific cohesin complex probably replaces mitosis specific cohesin complex when it dissociates from chromatin during prophase I. In Homo sapiens (Human), this protein is Structural maintenance of chromosomes protein 1B (SMC1B).